The sequence spans 499 residues: Lysine--tRNA ligase (499 aa).

2 residues coordinate Mg(2+): Glu408 and Glu415.

This sequence belongs to the class-II aminoacyl-tRNA synthetase family. Homodimer. Mg(2+) is required as a cofactor.

The protein localises to the cytoplasm. It carries out the reaction tRNA(Lys) + L-lysine + ATP = L-lysyl-tRNA(Lys) + AMP + diphosphate. In Bacillus cereus (strain G9842), this protein is Lysine--tRNA ligase.